We begin with the raw amino-acid sequence, 458 residues long: Probable Xaa-Pro aminopeptidase pepP (458 aa).

Positions 254, 265, 388, and 428 each coordinate Mn(2+).

It belongs to the peptidase M24B family. Requires Mn(2+) as cofactor.

The catalysed reaction is Release of any N-terminal amino acid, including proline, that is linked to proline, even from a dipeptide or tripeptide.. In terms of biological role, catalyzes the removal of a penultimate prolyl residue from the N-termini of peptides. This is Probable Xaa-Pro aminopeptidase pepP (pepP) from Botryotinia fuckeliana (strain B05.10) (Noble rot fungus).